A 367-amino-acid polypeptide reads, in one-letter code: Probable butyrate kinase (367 aa).

The protein belongs to the acetokinase family.

It is found in the cytoplasm. The catalysed reaction is butanoate + ATP = butanoyl phosphate + ADP. The chain is Probable butyrate kinase from Bacillus cereus (strain B4264).